Consider the following 104-residue polypeptide: UPF0145 protein GTNG_1265 (104 aa).

It belongs to the UPF0145 family.

The protein is UPF0145 protein GTNG_1265 of Geobacillus thermodenitrificans (strain NG80-2).